The chain runs to 355 residues: UDP-3-O-acylglucosamine N-acyltransferase (355 aa).

His-258 acts as the Proton acceptor in catalysis.

Belongs to the transferase hexapeptide repeat family. LpxD subfamily. As to quaternary structure, homotrimer.

It catalyses the reaction a UDP-3-O-[(3R)-3-hydroxyacyl]-alpha-D-glucosamine + a (3R)-hydroxyacyl-[ACP] = a UDP-2-N,3-O-bis[(3R)-3-hydroxyacyl]-alpha-D-glucosamine + holo-[ACP] + H(+). It functions in the pathway bacterial outer membrane biogenesis; LPS lipid A biosynthesis. Functionally, catalyzes the N-acylation of UDP-3-O-acylglucosamine using 3-hydroxyacyl-ACP as the acyl donor. Is involved in the biosynthesis of lipid A, a phosphorylated glycolipid that anchors the lipopolysaccharide to the outer membrane of the cell. This chain is UDP-3-O-acylglucosamine N-acyltransferase, found in Rhizobium rhizogenes (strain K84 / ATCC BAA-868) (Agrobacterium radiobacter).